A 120-amino-acid polypeptide reads, in one-letter code: NAD(P)H-quinone oxidoreductase subunit 3, chloroplastic (120 aa).

Transmembrane regions (helical) follow at residues 9 to 29 (IFWAFLIISSAIPVLAFLISG), 64 to 84 (MFALVFVVFDVETVFLYPWAM), and 88 to 108 (VLGVSAFIEVFIFVLILILGL).

This sequence belongs to the complex I subunit 3 family. NDH is composed of at least 16 different subunits, 5 of which are encoded in the nucleus.

It localises to the plastid. It is found in the chloroplast thylakoid membrane. It catalyses the reaction a plastoquinone + NADH + (n+1) H(+)(in) = a plastoquinol + NAD(+) + n H(+)(out). It carries out the reaction a plastoquinone + NADPH + (n+1) H(+)(in) = a plastoquinol + NADP(+) + n H(+)(out). NDH shuttles electrons from NAD(P)H:plastoquinone, via FMN and iron-sulfur (Fe-S) centers, to quinones in the photosynthetic chain and possibly in a chloroplast respiratory chain. The immediate electron acceptor for the enzyme in this species is believed to be plastoquinone. Couples the redox reaction to proton translocation, and thus conserves the redox energy in a proton gradient. In Arabis hirsuta (Hairy rock-cress), this protein is NAD(P)H-quinone oxidoreductase subunit 3, chloroplastic.